A 327-amino-acid chain; its full sequence is Cobalamin biosynthesis protein CobD (327 aa).

The next 4 membrane-spanning stretches (helical) occupy residues Met61–Ile78, Ser80–Ala102, Gly160–Ile182, and Ala300–Val322.

The protein belongs to the CobD/CbiB family.

Its subcellular location is the cell membrane. The protein operates within cofactor biosynthesis; adenosylcobalamin biosynthesis. Converts cobyric acid to cobinamide by the addition of aminopropanol on the F carboxylic group. This chain is Cobalamin biosynthesis protein CobD, found in Brucella suis biovar 1 (strain 1330).